The sequence spans 232 residues: 5'-methylthioadenosine/S-adenosylhomocysteine nucleosidase (232 aa).

The Proton acceptor role is filled by E12. Residues G78, I152, and 173–174 (ME) contribute to the substrate site. D197 serves as the catalytic Proton donor.

The protein belongs to the PNP/UDP phosphorylase family. MtnN subfamily. As to quaternary structure, homodimer.

It catalyses the reaction S-adenosyl-L-homocysteine + H2O = S-(5-deoxy-D-ribos-5-yl)-L-homocysteine + adenine. The enzyme catalyses S-methyl-5'-thioadenosine + H2O = 5-(methylsulfanyl)-D-ribose + adenine. The catalysed reaction is 5'-deoxyadenosine + H2O = 5-deoxy-D-ribose + adenine. It functions in the pathway amino-acid biosynthesis; L-methionine biosynthesis via salvage pathway; S-methyl-5-thio-alpha-D-ribose 1-phosphate from S-methyl-5'-thioadenosine (hydrolase route): step 1/2. Catalyzes the irreversible cleavage of the glycosidic bond in both 5'-methylthioadenosine (MTA) and S-adenosylhomocysteine (SAH/AdoHcy) to adenine and the corresponding thioribose, 5'-methylthioribose and S-ribosylhomocysteine, respectively. Also cleaves 5'-deoxyadenosine, a toxic by-product of radical S-adenosylmethionine (SAM) enzymes, into 5-deoxyribose and adenine. Thus, is required for in vivo function of the radical SAM enzymes biotin synthase and lipoic acid synthase, that are inhibited by 5'-deoxyadenosine accumulation. The protein is 5'-methylthioadenosine/S-adenosylhomocysteine nucleosidase of Salmonella agona (strain SL483).